A 561-amino-acid chain; its full sequence is Putative transport protein YbjL (561 aa).

5 helical membrane passes run Leu-8–Gly-28, Leu-32–Gln-52, Phe-66–Phe-86, Met-94–Phe-114, and Asn-158–Ala-178. RCK C-terminal domains lie at Arg-200 to Asn-288 and Val-292 to Phe-373. 5 helical membrane passes run Leu-383–Phe-403, Phe-406–Leu-426, Phe-447–Gly-467, Met-475–Ala-495, and Ala-540–Leu-560.

It belongs to the AAE transporter (TC 2.A.81) family. YbjL subfamily.

It is found in the cell membrane. The polypeptide is Putative transport protein YbjL (Salmonella agona (strain SL483)).